Reading from the N-terminus, the 434-residue chain is Histidinol dehydrogenase (434 aa).

3 residues coordinate NAD(+): Y129, Q191, and N214. S240, Q262, and H265 together coordinate substrate. Zn(2+)-binding residues include Q262 and H265. Residues E329 and H330 each act as proton acceptor in the active site. The substrate site is built by H330, D363, E417, and H422. D363 contacts Zn(2+). Residue H422 participates in Zn(2+) binding.

It belongs to the histidinol dehydrogenase family. The cofactor is Zn(2+).

It carries out the reaction L-histidinol + 2 NAD(+) + H2O = L-histidine + 2 NADH + 3 H(+). It participates in amino-acid biosynthesis; L-histidine biosynthesis; L-histidine from 5-phospho-alpha-D-ribose 1-diphosphate: step 9/9. Its function is as follows. Catalyzes the sequential NAD-dependent oxidations of L-histidinol to L-histidinaldehyde and then to L-histidine. The polypeptide is Histidinol dehydrogenase (Colwellia psychrerythraea (strain 34H / ATCC BAA-681) (Vibrio psychroerythus)).